We begin with the raw amino-acid sequence, 162 residues long: Small ribosomal subunit protein uS5 (162 aa).

Residues 7–70 (EEKMILIRRT…YARRNMVEVP (64 aa)) form the S5 DRBM domain.

It belongs to the universal ribosomal protein uS5 family. Part of the 30S ribosomal subunit. Contacts proteins S4 and S8.

Its function is as follows. With S4 and S12 plays an important role in translational accuracy. In terms of biological role, located at the back of the 30S subunit body where it stabilizes the conformation of the head with respect to the body. This Thermus thermophilus (strain ATCC BAA-163 / DSM 7039 / HB27) protein is Small ribosomal subunit protein uS5 (rpsE).